The chain runs to 2236 residues: uncharacterized protein (2236 aa).

Spectrin repeat units follow at residues 46 to 146 (QVYL…RQLE) and 238 to 335 (QKFV…TDIE). 2 coiled-coil regions span residues 496–541 (VVEQ…TVNS) and 603–631 (DDQQKNMANEELRKTYENLKKIEMEVGRQ). 5 Spectrin repeats span residues 839-949 (YEYD…KTLK), 1048-1146 (KKLE…KRME), 1261-1361 (LGAE…VDLN), 1367-1459 (ILID…KSLA), and 1562-1667 (QKVV…NRLE). The stretch at 1835 to 1869 (QNSTDAEKKLSLVSERLNALKKQLDLLAEKIAVDD) forms a coiled coil. EF-hand domains lie at 2104–2139 (KQLHEFELAFDYFDRERNGWLDYKHFELCLKSQGYN) and 2141–2176 (SAENTLKETMTLLDPSTTGHIQKHDYVRYMVKHETT). 5 residues coordinate Ca(2+): aspartate 2154, serine 2156, threonine 2158, histidine 2160, and aspartate 2165.

The protein belongs to the spectrin family.

This is an uncharacterized protein from Caenorhabditis elegans.